A 129-amino-acid chain; its full sequence is MRHRYSGRKLGRTSSHRDAMFRNMVTSLFEHERIVTTKEKAKELRPIAEKMITLGKRGDLHARRQALSYVRCAGVVHKLFGEIAEQFADRKGGYTRIIQTGVRRGDNASMAIIELVGYDETVAAATTEA.

This sequence belongs to the bacterial ribosomal protein bL17 family. Part of the 50S ribosomal subunit. Contacts protein L32.

In Desulfotalea psychrophila (strain LSv54 / DSM 12343), this protein is Large ribosomal subunit protein bL17.